The following is a 671-amino-acid chain: Archaeal Rqc2 homolog aRqcH (671 aa).

Coiled coils occupy residues 291–363 (KVVV…ARIK) and 410–465 (RKNA…MQMK).

The protein belongs to the NEMF family. Associates with stalled 50S ribosomal subunits.

Its function is as follows. Probably part of the ribosome quality control system (RQC). May mediate the addition of alanine residues (Ala tailing) to incompletely synthesized nascent chains from stalled ribosomes, leading to their degradation. This is Archaeal Rqc2 homolog aRqcH from Methanocaldococcus jannaschii (strain ATCC 43067 / DSM 2661 / JAL-1 / JCM 10045 / NBRC 100440) (Methanococcus jannaschii).